The sequence spans 319 residues: Annexin A5 (319 aa).

Position 2 is an N-acetylalanine (Ala2). Annexin repeat units lie at residues 13 to 84, 85 to 156, 168 to 240, and 244 to 315; these read FDGR…AMMK, PSRL…VLLQ, AQVE…AVVK, and SIPA…LLCG. Lys27 participates in a covalent cross-link: Glycyl lysine isopeptide (Lys-Gly) (interchain with G-Cter in SUMO1); alternate. Lys27 is covalently cross-linked (Glycyl lysine isopeptide (Lys-Gly) (interchain with G-Cter in SUMO2); alternate). Residue Ser35 is modified to Phosphoserine. Residues Lys68, Lys74, Lys77, Lys95, and Lys99 each carry the N6-acetyllysine modification. Lys288 bears the N6-succinyllysine mark. Residues 312–318 carry the [IL]-x-C-x-x-[DE] motif motif; the sequence is LLCGGED.

The protein belongs to the annexin family. In terms of assembly, monomer. Binds ATRX and EIF5B. Post-translationally, S-nitrosylation is induced by interferon-gamma and oxidatively-modified low-densitity lipoprotein (LDL(ox)) possibly implicating the iNOS-S100A8/9 transnitrosylase complex.

Functionally, this protein is an anticoagulant protein that acts as an indirect inhibitor of the thromboplastin-specific complex, which is involved in the blood coagulation cascade. The polypeptide is Annexin A5 (Anxa5) (Mus musculus (Mouse)).